The chain runs to 114 residues: U5-lycotoxin-Ls1a (114 aa).

A signal peptide spans 1–20 (MKYQILFGVVFLTLLSYCYS). Residues 21 to 45 (EIEDEFENFVDEEMVEADDPFSLAR) constitute a propeptide that is removed on maturation. 3 disulfides stabilise this stretch: Cys51–Cys66, Cys65–Cys93, and Cys77–Cys91.

The protein belongs to the neurotoxin 19 (CSTX) family. 04 (U1-Lctx) subfamily. In terms of tissue distribution, expressed by the venom gland.

It localises to the secreted. The protein is U5-lycotoxin-Ls1a of Lycosa singoriensis (Wolf spider).